The sequence spans 274 residues: Large ribosomal subunit protein uL2cz/uL2cy (274 aa).

Disordered regions lie at residues 1 to 23 (MAIH…SKVK) and 224 to 274 (NPVD…RRSK).

This sequence belongs to the universal ribosomal protein uL2 family. In terms of assembly, part of the 50S ribosomal subunit.

Its subcellular location is the plastid. It localises to the chloroplast. The chain is Large ribosomal subunit protein uL2cz/uL2cy (rpl2-A) from Lactuca sativa (Garden lettuce).